The sequence spans 237 residues: Ribose-5-phosphate isomerase A (237 aa).

Substrate contacts are provided by residues 30–33 (SGST), 87–90 (DGAD), and 100–103 (KGGG). The Proton acceptor role is filled by Glu109. Position 127 (Lys127) interacts with substrate.

The protein belongs to the ribose 5-phosphate isomerase family. Homodimer.

The enzyme catalyses aldehydo-D-ribose 5-phosphate = D-ribulose 5-phosphate. It participates in carbohydrate degradation; pentose phosphate pathway; D-ribose 5-phosphate from D-ribulose 5-phosphate (non-oxidative stage): step 1/1. Its function is as follows. Catalyzes the reversible conversion of ribose-5-phosphate to ribulose 5-phosphate. The sequence is that of Ribose-5-phosphate isomerase A from Prochlorococcus marinus (strain MIT 9211).